Here is a 289-residue protein sequence, read N- to C-terminus: BTB/POZ domain-containing protein KCTD7 (289 aa).

A disordered region spans residues 1-42; it reads MVVVNGREPDSRHSDGAMSSSEAEDDFLEPATPTATQAGHGL. The 89-residue stretch at 53-141 folds into the BTB domain; the sequence is VPLNIGGAHF…YAIGPLLEQL (89 aa).

In terms of assembly, interacts with CUL3.

The protein resides in the cell membrane. Its subcellular location is the cytoplasm. It is found in the cytosol. May be involved in the control of excitability of cortical neurons. The protein is BTB/POZ domain-containing protein KCTD7 (Kctd7) of Rattus norvegicus (Rat).